The following is a 411-amino-acid chain: Citrate synthase (411 aa).

Residues His304 and Asp363 contribute to the active site.

It belongs to the citrate synthase family.

The enzyme catalyses oxaloacetate + acetyl-CoA + H2O = citrate + CoA + H(+). It functions in the pathway carbohydrate metabolism; tricarboxylic acid cycle; isocitrate from oxaloacetate: step 1/2. The protein is Citrate synthase (gltA) of Rickettsia parkeri.